We begin with the raw amino-acid sequence, 315 residues long: Putative quercetin 2,3-dioxygenase PA1205 (315 aa).

The a divalent metal cation site is built by H77, H79, H121, and E123.

This sequence belongs to the pirin family. It depends on a divalent metal cation as a cofactor.

The enzyme catalyses quercetin + O2 = 2-(3,4-dihydroxybenzoyloxy)-4,6-dihydroxybenzoate + CO. It participates in flavonoid metabolism; quercetin degradation. Putative quercetin 2,3-dioxygenase. The polypeptide is Putative quercetin 2,3-dioxygenase PA1205 (Pseudomonas aeruginosa (strain ATCC 15692 / DSM 22644 / CIP 104116 / JCM 14847 / LMG 12228 / 1C / PRS 101 / PAO1)).